Consider the following 179-residue polypeptide: MARLQEIYRDKIAPELVKQFGYTSPMQVPRLTKITLNMGVSEAVADKKIMDNAVADLTKIAGQKPVVTKAKKAIAGFKIREGQAIGCMVTLRGAQMYEFLDRFVTIALPRVRDFRGISGRAFDGRGNYNIGVKEQIIFPEIEYDKVDALRGLNISITTTAKTDEEAKALLTAFRFPFKN.

It belongs to the universal ribosomal protein uL5 family. As to quaternary structure, part of the 50S ribosomal subunit; part of the 5S rRNA/L5/L18/L25 subcomplex. Contacts the 5S rRNA and the P site tRNA. Forms a bridge to the 30S subunit in the 70S ribosome.

This is one of the proteins that bind and probably mediate the attachment of the 5S RNA into the large ribosomal subunit, where it forms part of the central protuberance. In the 70S ribosome it contacts protein S13 of the 30S subunit (bridge B1b), connecting the 2 subunits; this bridge is implicated in subunit movement. Contacts the P site tRNA; the 5S rRNA and some of its associated proteins might help stabilize positioning of ribosome-bound tRNAs. The chain is Large ribosomal subunit protein uL5 from Acidovorax ebreus (strain TPSY) (Diaphorobacter sp. (strain TPSY)).